A 434-amino-acid polypeptide reads, in one-letter code: Histidinol dehydrogenase (434 aa).

Residues tyrosine 130, glutamine 191, and asparagine 214 each contribute to the NAD(+) site. 3 residues coordinate substrate: serine 237, glutamine 259, and histidine 262. Positions 259 and 262 each coordinate Zn(2+). Active-site proton acceptor residues include glutamate 327 and histidine 328. Substrate contacts are provided by histidine 328, aspartate 361, glutamate 415, and histidine 420. A Zn(2+)-binding site is contributed by aspartate 361. Residue histidine 420 coordinates Zn(2+).

This sequence belongs to the histidinol dehydrogenase family. The cofactor is Zn(2+).

It carries out the reaction L-histidinol + 2 NAD(+) + H2O = L-histidine + 2 NADH + 3 H(+). It functions in the pathway amino-acid biosynthesis; L-histidine biosynthesis; L-histidine from 5-phospho-alpha-D-ribose 1-diphosphate: step 9/9. Catalyzes the sequential NAD-dependent oxidations of L-histidinol to L-histidinaldehyde and then to L-histidine. This is Histidinol dehydrogenase from Cereibacter sphaeroides (strain ATCC 17023 / DSM 158 / JCM 6121 / CCUG 31486 / LMG 2827 / NBRC 12203 / NCIMB 8253 / ATH 2.4.1.) (Rhodobacter sphaeroides).